The primary structure comprises 92 residues: Small ribosomal subunit protein uS19 (92 aa).

Belongs to the universal ribosomal protein uS19 family.

Protein S19 forms a complex with S13 that binds strongly to the 16S ribosomal RNA. In Crocosphaera subtropica (strain ATCC 51142 / BH68) (Cyanothece sp. (strain ATCC 51142)), this protein is Small ribosomal subunit protein uS19.